A 507-amino-acid polypeptide reads, in one-letter code: ATP synthase subunit alpha, chloroplastic (507 aa).

170-177 (GDRQTGKT) provides a ligand contact to ATP.

The protein belongs to the ATPase alpha/beta chains family. In terms of assembly, F-type ATPases have 2 components, CF(1) - the catalytic core - and CF(0) - the membrane proton channel. CF(1) has five subunits: alpha(3), beta(3), gamma(1), delta(1), epsilon(1). CF(0) has four main subunits: a, b, b' and c.

It is found in the plastid. The protein resides in the chloroplast thylakoid membrane. The catalysed reaction is ATP + H2O + 4 H(+)(in) = ADP + phosphate + 5 H(+)(out). Produces ATP from ADP in the presence of a proton gradient across the membrane. The alpha chain is a regulatory subunit. In Ranunculus macranthus (Large buttercup), this protein is ATP synthase subunit alpha, chloroplastic.